The primary structure comprises 66 residues: Beta-mammal toxin Co3 (66 aa).

The LCN-type CS-alpha/beta domain occupies 1 to 66 (KEGYIVNYYD…VWPLPNKTCN (66 aa)). 4 cysteine pairs are disulfide-bonded: Cys-12–Cys-65, Cys-16–Cys-41, Cys-25–Cys-46, and Cys-29–Cys-48.

In terms of tissue distribution, expressed by the venom gland.

It localises to the secreted. Beta toxins bind voltage-independently at site-4 of sodium channels (Nav) and shift the voltage of activation toward more negative potentials thereby affecting sodium channel activation and promoting spontaneous and repetitive firing. This toxin acts on human Nav1.2/SCN2A, Nav1.4/SCN4A and Nav1.6/SCN8A voltage-gated sodium channels. Also, it reduces the peak of sodium currents in Nav1.5/SCN5A at all potentials. In vivo, is lethal to mice when intraperitoneally injected at a dose of 5ug. No activity is observed when injected into crickets or woodlice. This is Beta-mammal toxin Co3 from Centruroides ornatus (Scorpion).